Here is a 444-residue protein sequence, read N- to C-terminus: Homogentisate 1,2-dioxygenase (444 aa).

The segment at 92–111 is disordered; that stretch reads GDSADVPPTPPNQLRWDPLP. His-298 serves as the catalytic Proton acceptor. Residues His-341 and Glu-347 each contribute to the Fe cation site. Homogentisate-binding residues include Tyr-356 and His-377. His-377 lines the Fe cation pocket.

This sequence belongs to the homogentisate dioxygenase family. As to quaternary structure, hexamer; dimer of trimers. Fe cation is required as a cofactor.

The enzyme catalyses homogentisate + O2 = 4-maleylacetoacetate + H(+). It functions in the pathway amino-acid degradation; L-phenylalanine degradation; acetoacetate and fumarate from L-phenylalanine: step 4/6. Involved in the catabolism of homogentisate (2,5-dihydroxyphenylacetate or 2,5-OH-PhAc), a central intermediate in the degradation of phenylalanine and tyrosine. Catalyzes the oxidative ring cleavage of the aromatic ring of homogentisate to yield maleylacetoacetate. The sequence is that of Homogentisate 1,2-dioxygenase from Burkholderia vietnamiensis (strain G4 / LMG 22486) (Burkholderia cepacia (strain R1808)).